The sequence spans 839 residues: Protein translocase subunit SecA (839 aa).

Residues Gln85, 103–107, and Asp493 contribute to the ATP site; that span reads GEGKT. Residues 780-790 are compositionally biased toward basic and acidic residues; it reads QIHEQERERAS. A disordered region spans residues 780 to 839; that stretch reads QIHEQERERASQRATTAAPQNIQSQQSANTDDLPKVERNEACPCGSGKKFKNCHGRKSFS. Over residues 791–809 the composition is skewed to polar residues; that stretch reads QRATTAAPQNIQSQQSANT. The Zn(2+) site is built by Cys821, Cys823, Cys832, and His833. The span at 827–839 shows a compositional bias: basic residues; that stretch reads KKFKNCHGRKSFS.

The protein belongs to the SecA family. As to quaternary structure, monomer and homodimer. Part of the essential Sec protein translocation apparatus which comprises SecA, SecYEG and auxiliary proteins SecDF. Other proteins may also be involved. Requires Zn(2+) as cofactor.

It localises to the cell membrane. It is found in the cytoplasm. The catalysed reaction is ATP + H2O + cellular proteinSide 1 = ADP + phosphate + cellular proteinSide 2.. Functionally, part of the Sec protein translocase complex. Interacts with the SecYEG preprotein conducting channel. Has a central role in coupling the hydrolysis of ATP to the transfer of proteins into and across the cell membrane, serving as an ATP-driven molecular motor driving the stepwise translocation of polypeptide chains across the membrane. This Streptococcus pyogenes serotype M6 (strain ATCC BAA-946 / MGAS10394) protein is Protein translocase subunit SecA.